The following is a 313-amino-acid chain: tRNA dimethylallyltransferase (313 aa).

Position 10–17 (10–17) interacts with ATP; sequence GPTASGKT. 12–17 lines the substrate pocket; that stretch reads TASGKT. Interaction with substrate tRNA regions lie at residues 35 to 38, 159 to 163, and 240 to 245; these read DSAM, QRIQR, and RCVGYR.

This sequence belongs to the IPP transferase family. In terms of assembly, monomer. Requires Mg(2+) as cofactor.

It catalyses the reaction adenosine(37) in tRNA + dimethylallyl diphosphate = N(6)-dimethylallyladenosine(37) in tRNA + diphosphate. In terms of biological role, catalyzes the transfer of a dimethylallyl group onto the adenine at position 37 in tRNAs that read codons beginning with uridine, leading to the formation of N6-(dimethylallyl)adenosine (i(6)A). The sequence is that of tRNA dimethylallyltransferase from Legionella pneumophila (strain Lens).